We begin with the raw amino-acid sequence, 311 residues long: tRNA-cytidine(32) 2-sulfurtransferase (311 aa).

Positions serine 47–serine 52 match the PP-loop motif motif. 3 residues coordinate [4Fe-4S] cluster: cysteine 122, cysteine 125, and cysteine 213.

This sequence belongs to the TtcA family. In terms of assembly, homodimer. The cofactor is Mg(2+). [4Fe-4S] cluster is required as a cofactor.

The protein localises to the cytoplasm. The enzyme catalyses cytidine(32) in tRNA + S-sulfanyl-L-cysteinyl-[cysteine desulfurase] + AH2 + ATP = 2-thiocytidine(32) in tRNA + L-cysteinyl-[cysteine desulfurase] + A + AMP + diphosphate + H(+). It functions in the pathway tRNA modification. Functionally, catalyzes the ATP-dependent 2-thiolation of cytidine in position 32 of tRNA, to form 2-thiocytidine (s(2)C32). The sulfur atoms are provided by the cysteine/cysteine desulfurase (IscS) system. The polypeptide is tRNA-cytidine(32) 2-sulfurtransferase (Escherichia coli (strain SMS-3-5 / SECEC)).